Here is a 275-residue protein sequence, read N- to C-terminus: MGKSFSHLPLHSNKEDGYDGMTSTENIRNGLVNGEVHNEDGRSGDVSQFPYVEFTGRDSVTCPTCQGTGRIPRGQENQLVALIPYSDQRLRPRRTKLYVMASVFVCLLLSGLAVFFLFPRSIDVKYIGVKSAYVSYDVQKRTIYLNITNTLNITNNNYYSVEVENITAQVQFSKTVIGKARLNNITSIGPLDMKQIDYTVPTVIAEEMSYMFDFCTLLTIKVHNIVLMMQVTVTTTYFGHSEQISQERYQYVDCGRNTTYHLGQSEYLNVLQPQQ.

Residues 1 to 24 (MGKSFSHLPLHSNKEDGYDGMTST) form a disordered region. A lipid anchor (N-myristoyl glycine) is attached at glycine 2. Residues 2 to 97 (GKSFSHLPLH…QRLRPRRTKL (96 aa)) are Cytoplasmic-facing. The helical transmembrane segment at 98 to 118 (YVMASVFVCLLLSGLAVFFLF) threads the bilayer. At 119-275 (PRSIDVKYIG…EYLNVLQPQQ (157 aa)) the chain is on the lumenal side. N-linked (GlcNAc...) asparagine glycans are attached at residues asparagine 146, asparagine 152, asparagine 165, and asparagine 184. Cysteine 215 and cysteine 254 are disulfide-bonded. An N-linked (GlcNAc...) asparagine glycan is attached at asparagine 257.

The protein belongs to the TMEM106 family. As to quaternary structure, can form homomers. Interacts (via N-terminus) with MAP6 (via C-terminus). Interacts (via C-terminus) with the vacuolar-type ATPase subunit ATP6AP1. Interacts (via N-terminus) with AP2M1 and CLTC. Interacts with TMEM106C.

Its subcellular location is the late endosome membrane. It localises to the lysosome membrane. It is found in the cell membrane. In neurons, involved in the transport of late endosomes/lysosomes. May be involved in dendrite morphogenesis and maintenance by regulating lysosomal trafficking. May act as a molecular brake for retrograde transport of late endosomes/lysosomes, possibly via its interaction with MAP6. In motoneurons, may mediate the axonal transport of lysosomes and axonal sorting at the initial segment. It remains unclear whether TMEM106B affects the transport of moving lysosomes in the anterograde or retrograde direction in neurites and whether it is particularly important in the sorting of lysosomes in axons or in dendrites. In neurons, may also play a role in the regulation of lysosomal size and responsiveness to stress. Required for proper lysosomal acidification. The chain is Transmembrane protein 106B (TMEM106B) from Bos taurus (Bovine).